Here is a 154-residue protein sequence, read N- to C-terminus: U1 small nuclear ribonucleoprotein C (154 aa).

Residues 4-36 (YYCDYCDTYLTHDSPSVRKTHCTGRKHKDNVKF) form a Matrin-type zinc finger.

This sequence belongs to the U1 small nuclear ribonucleoprotein C family. As to quaternary structure, U1 snRNP is composed of the 7 core Sm proteins B/B', D1, D2, D3, E, F and G that assemble in a heptameric protein ring on the Sm site of the small nuclear RNA to form the core snRNP, and at least 3 U1 snRNP-specific proteins U1-70K, U1-A and U1-C. U1-C interacts with U1 snRNA and the 5' splice-site region of the pre-mRNA.

It is found in the nucleus. In terms of biological role, component of the spliceosomal U1 snRNP, which is essential for recognition of the pre-mRNA 5' splice-site and the subsequent assembly of the spliceosome. U1-C is directly involved in initial 5' splice-site recognition for both constitutive and regulated alternative splicing. The interaction with the 5' splice-site seems to precede base-pairing between the pre-mRNA and the U1 snRNA. Stimulates commitment or early (E) complex formation by stabilizing the base pairing of the 5' end of the U1 snRNA and the 5' splice-site region. The polypeptide is U1 small nuclear ribonucleoprotein C (Aedes aegypti (Yellowfever mosquito)).